The sequence spans 144 residues: 6-pyruvoyl tetrahydrobiopterin synthase (144 aa).

Ser18 bears the Phosphoserine mark. His23 is a binding site for Zn(2+). Residue Ser27 is modified to Phosphoserine. Cys42 serves as the catalytic Proton acceptor. His48 and His50 together coordinate Zn(2+). Catalysis depends on His89, which acts as the Charge relay system. The residue at position 127 (Tyr127) is a Phosphotyrosine. The active-site Charge relay system is the Glu133.

This sequence belongs to the PTPS family. In terms of assembly, homodimer. Homohexamer formed of two homotrimers in a head to head fashion. The cofactor is Zn(2+). Phosphorylation of Ser-18 is required for maximal enzyme activity.

It carries out the reaction 7,8-dihydroneopterin 3'-triphosphate = 6-pyruvoyl-5,6,7,8-tetrahydropterin + triphosphate + H(+). It participates in cofactor biosynthesis; tetrahydrobiopterin biosynthesis; tetrahydrobiopterin from 7,8-dihydroneopterin triphosphate: step 1/3. Involved in the biosynthesis of tetrahydrobiopterin, an essential cofactor of aromatic amino acid hydroxylases. Catalyzes the transformation of 7,8-dihydroneopterin triphosphate into 6-pyruvoyl tetrahydropterin. This chain is 6-pyruvoyl tetrahydrobiopterin synthase, found in Mus musculus (Mouse).